The sequence spans 1894 residues: Plexin-A4 (1894 aa).

Positions 1–23 are cleaved as a signal peptide; it reads MKAMPWNWTCLLSHLLMVGMGSS. Residues 24 to 507 enclose the Sema domain; that stretch reads TLLTRQPAPL…SERQLTRVPV (484 aa). Residues 24 to 1237 lie on the Extracellular side of the membrane; it reads TLLTRQPAPL…IAPDSPLSLP (1214 aa). 10 disulfide bridges follow: cysteine 95/cysteine 104, cysteine 130/cysteine 138, cysteine 284/cysteine 405, cysteine 300/cysteine 356, cysteine 374/cysteine 393, cysteine 510/cysteine 527, cysteine 516/cysteine 558, cysteine 519/cysteine 536, cysteine 530/cysteine 542, and cysteine 593/cysteine 612. The PSI 1 domain maps to 509–559; that stretch reads SCGQYQSCGECLGSGDPHCGWCVLHNTCTRKERCERSKEPRRFASEMKQCV. N-linked (GlcNAc...) asparagine glycosylation occurs at asparagine 655. 2 consecutive PSI domains span residues 655-702 and 803-856; these read NCSV…EDCP and KCGA…SKCT. 4 consecutive IPT/TIG domains span residues 858 to 952, 954 to 1037, 1040 to 1139, and 1142 to 1230; these read PRIT…YYFM, LTLS…FQYV, PTIV…FTYY, and PVFE…YIAP. N-linked (GlcNAc...) asparagine glycosylation is found at asparagine 1007, asparagine 1132, and asparagine 1180. Residues 1238 to 1258 form a helical membrane-spanning segment; sequence AIVSIAVAGGLLIIFIVAVLI. Topologically, residues 1259 to 1894 are cytoplasmic; the sequence is AYKRKSRESD…QVITLMSLDS (636 aa). Position 1350 is an N6-acetyllysine (lysine 1350).

Belongs to the plexin family. Interacts with NRP1 and NRP2.

The protein resides in the cell membrane. Its function is as follows. Coreceptor for SEMA3A. Necessary for signaling by class 3 semaphorins and subsequent remodeling of the cytoskeleton. Plays a role in axon guidance in the developing nervous system. Class 3 semaphorins bind to a complex composed of a neuropilin and a plexin. The plexin modulates the affinity of the complex for specific semaphorins, and its cytoplasmic domain is required for the activation of down-stream signaling events in the cytoplasm. This chain is Plexin-A4 (PLXNA4), found in Homo sapiens (Human).